The chain runs to 828 residues: Leucine--tRNA ligase (828 aa).

Positions P36–H46 match the 'HIGH' region motif. Residues K595 to S599 carry the 'KMSKS' region motif. K598 is an ATP binding site.

This sequence belongs to the class-I aminoacyl-tRNA synthetase family.

It localises to the cytoplasm. It catalyses the reaction tRNA(Leu) + L-leucine + ATP = L-leucyl-tRNA(Leu) + AMP + diphosphate. The polypeptide is Leucine--tRNA ligase (Rickettsia prowazekii (strain Madrid E)).